The primary structure comprises 248 residues: MPRYLKGWLKDVVQLSLRRPSFRASRQRPIISLNERILEFNKRNITAIIAEYKRKSPSGLDVERDPIEYSKFMERYAVGLSILTEEKYFNGSYETLRKIASSVSIPILMKDFIVKESQIDDAYNLGADTVLLIVKILTERELESLLEYARSYGMEPLIEINDENDLDIALRIGARFIGINSRDLETLEINKENQRKLISMIPSNVVKVAESGISERNEIEELRKLGVNAFLIGSSLMRNPEKIKEFIL.

The protein belongs to the TrpC family. As to quaternary structure, monomer.

It carries out the reaction 1-(2-carboxyphenylamino)-1-deoxy-D-ribulose 5-phosphate + H(+) = (1S,2R)-1-C-(indol-3-yl)glycerol 3-phosphate + CO2 + H2O. It participates in amino-acid biosynthesis; L-tryptophan biosynthesis; L-tryptophan from chorismate: step 4/5. This Saccharolobus solfataricus (strain ATCC 35092 / DSM 1617 / JCM 11322 / P2) (Sulfolobus solfataricus) protein is Indole-3-glycerol phosphate synthase (trpC).